Reading from the N-terminus, the 184-residue chain is UPF0397 protein SAOUHSC_03020 (184 aa).

5 helical membrane passes run 11–31, 44–64, 77–97, 116–136, and 148–168; these read VVAI…VVIP, AFLA…TGLV, AWWS…WIGL, IGQI…LDIL, and QGVI…TILL.

This sequence belongs to the UPF0397 family.

Its subcellular location is the cell membrane. This Staphylococcus aureus (strain NCTC 8325 / PS 47) protein is UPF0397 protein SAOUHSC_03020.